Reading from the N-terminus, the 195-residue chain is Ribosomal RNA small subunit methyltransferase G (195 aa).

Residues Gly60, Leu65, 114-115, and Arg128 each bind S-adenosyl-L-methionine; that span reads IE.

This sequence belongs to the methyltransferase superfamily. RNA methyltransferase RsmG family.

The protein resides in the cytoplasm. It catalyses the reaction guanosine(527) in 16S rRNA + S-adenosyl-L-methionine = N(7)-methylguanosine(527) in 16S rRNA + S-adenosyl-L-homocysteine. Its function is as follows. Specifically methylates the N7 position of guanine in position 527 of 16S rRNA. The sequence is that of Ribosomal RNA small subunit methyltransferase G from Dinoroseobacter shibae (strain DSM 16493 / NCIMB 14021 / DFL 12).